The following is a 71-amino-acid chain: Protein SlyX homolog (71 aa).

It belongs to the SlyX family.

In Rhodopseudomonas palustris (strain BisB5), this protein is Protein SlyX homolog.